A 427-amino-acid chain; its full sequence is Acyltransferase fer5 (427 aa).

Positions Met-1–Pro-24 are disordered. Substrate is bound at residue His-342. Catalysis depends on Glu-380, which acts as the Proton acceptor.

Belongs to the lysine N-acyltransferase mbtK family.

It functions in the pathway siderophore biosynthesis. Its function is as follows. Acyltransferase; part of the gene cluster that mediates the biosynthesis of siderophore ferrichrome A which is contributing to organismal virulence. The first step of ferrichrome A biosynthesis is performed by the HMG-CoA synthase hcs1 which catalyzes the generation of HMG-CoA and CoA using acetoacetyl-CoA and acetyl-CoA as substrates. The enoyl-CoA isomerase/hydratase fer4 then catalyzes the conversion of hcs1-produced HMG-CoA to methylglutaconyl-CoA. The acyltransferase fer5 then fuses the fer4-generated methylglutaconyl-CoA with sid1-generated hydroxyornithine to yield methylglutaconyl hydroxyornithine. Methylglutaconyl hydroxyornithine is then available for use by the NRPS fer3 to generate ferrichrome A. This chain is Acyltransferase fer5, found in Mycosarcoma maydis (Corn smut fungus).